The sequence spans 273 residues: Bis(5'-nucleosyl)-tetraphosphatase, symmetrical (273 aa).

This sequence belongs to the Ap4A hydrolase family.

The catalysed reaction is P(1),P(4)-bis(5'-adenosyl) tetraphosphate + H2O = 2 ADP + 2 H(+). In terms of biological role, hydrolyzes diadenosine 5',5'''-P1,P4-tetraphosphate to yield ADP. The sequence is that of Bis(5'-nucleosyl)-tetraphosphatase, symmetrical (apaH) from Buchnera aphidicola subsp. Schizaphis graminum (strain Sg).